The following is a 254-amino-acid chain: Probable phosphatase Sbal223_2880 (254 aa).

Zn(2+)-binding residues include His8, His10, His16, His41, Glu74, His102, His132, Asp193, and His195.

Belongs to the PHP family. Requires Zn(2+) as cofactor.

This Shewanella baltica (strain OS223) protein is Probable phosphatase Sbal223_2880.